Here is a 421-residue protein sequence, read N- to C-terminus: Tyrosine--tRNA ligase (421 aa).

L-tyrosine is bound at residue Tyr38. A 'HIGH' region motif is present at residues 43–52 (PTGDSLHIGH). L-tyrosine contacts are provided by Tyr169 and Gln173. Positions 231 to 235 (KFGKS) match the 'KMSKS' region motif. Position 234 (Lys234) interacts with ATP. One can recognise an S4 RNA-binding domain in the interval 353 to 419 (KNLVDFLVDT…GKKKYTLVHI (67 aa)).

Belongs to the class-I aminoacyl-tRNA synthetase family. TyrS type 1 subfamily. In terms of assembly, homodimer.

Its subcellular location is the cytoplasm. The enzyme catalyses tRNA(Tyr) + L-tyrosine + ATP = L-tyrosyl-tRNA(Tyr) + AMP + diphosphate + H(+). Its function is as follows. Catalyzes the attachment of tyrosine to tRNA(Tyr) in a two-step reaction: tyrosine is first activated by ATP to form Tyr-AMP and then transferred to the acceptor end of tRNA(Tyr). The protein is Tyrosine--tRNA ligase of Lactobacillus delbrueckii subsp. bulgaricus (strain ATCC BAA-365 / Lb-18).